Reading from the N-terminus, the 381-residue chain is Gustatory and pheromone receptor 39a, isoform C (381 aa).

Residues 1-37 lie on the Cytoplasmic side of the membrane; sequence MDFQPGELCAYYRLCRYLGIFCIDYNPTKKKFRLRRS. The chain crosses the membrane as a helical span at residues 38 to 58; the sequence is VLCYIVHFALQAYLVGCISVM. Residues 59-79 lie on the Extracellular side of the membrane; it reads VTYWRRCFKSELTTTGNHFDR. A helical transmembrane segment spans residues 80-100; the sequence is LVMVIALGILVVQNAWLIWLQ. Over 101-129 the chain is Cytoplasmic; that stretch reads APHLRIVRQIEFYRRNHLANVRLLLPKRL. The chain crosses the membrane as a helical span at residues 130-150; it reads LWLIIATNVVYMANFIKTCIF. At 151-171 the chain is on the extracellular side; that stretch reads EWLTDASRLFVITSLGFPLRY. Residues 172-192 form a helical membrane-spanning segment; it reads LVTSFTMGTYFCMVHIVRLVL. Residues 193-239 are Cytoplasmic-facing; sequence DWNQSQINAIIDESADLKMTSPNRLRLRVCLEMHDRLMLLCNDEISL. The chain crosses the membrane as a helical span at residues 240–260; that stretch reads VYGFIAWLSWMFASLDVTGVI. Over 261-271 the chain is Extracellular; the sequence is YLTMVIQTKKS. Residues 272–292 traverse the membrane as a helical segment; it reads IVLKLITNVVWLSPTFMTCAA. At 293–350 the chain is on the cytoplasmic side; the sequence is SFMSNRVTIQANKTAKMLTKVPRTGTGLDRMIEKFLLKNLRQKPILTAYGFFALDKST. A helical transmembrane segment spans residues 351 to 371; sequence LFKLFTAIFTYMVILVQFKEM. The Extracellular portion of the chain corresponds to 372–381; it reads ENSTKSINKF. The N-linked (GlcNAc...) asparagine glycan is linked to N373.

It belongs to the insect chemoreceptor superfamily. Gustatory receptor (GR) family. Gr21a subfamily. As to expression, expressed in the adult labellar chemosensory neurons. In larvae, is expressed in neurons of the terminal external chemosensory organ, as well as in the dorsal pharyngeal sense organ.

The protein localises to the cell membrane. In terms of biological role, gustatory receptor which mediates acceptance or avoidance behavior, depending on its substrates. Plays a role in sustaining courtship behavior in males, possibly through the reception of a stimulating arrestant pheromone. The protein is Gustatory and pheromone receptor 39a, isoform C (Gr39a) of Drosophila melanogaster (Fruit fly).